Consider the following 81-residue polypeptide: Cytochrome b559 subunit alpha (81 aa).

The chain crosses the membrane as a helical span at residues 21–35 (VIHSITIPMLFIAGW). H23 provides a ligand contact to heme.

It belongs to the PsbE/PsbF family. As to quaternary structure, heterodimer of an alpha subunit and a beta subunit. PSII is composed of 1 copy each of membrane proteins PsbA, PsbB, PsbC, PsbD, PsbE, PsbF, PsbH, PsbI, PsbJ, PsbK, PsbL, PsbM, PsbT, PsbX, PsbY, PsbZ, Psb30/Ycf12, peripheral proteins PsbO, CyanoQ (PsbQ), PsbU, PsbV and a large number of cofactors. It forms dimeric complexes. Heme b is required as a cofactor.

The protein resides in the cellular thylakoid membrane. This b-type cytochrome is tightly associated with the reaction center of photosystem II (PSII). PSII is a light-driven water:plastoquinone oxidoreductase that uses light energy to abstract electrons from H(2)O, generating O(2) and a proton gradient subsequently used for ATP formation. It consists of a core antenna complex that captures photons, and an electron transfer chain that converts photonic excitation into a charge separation. In Crocosphaera subtropica (strain ATCC 51142 / BH68) (Cyanothece sp. (strain ATCC 51142)), this protein is Cytochrome b559 subunit alpha.